A 342-amino-acid polypeptide reads, in one-letter code: Ribosomal RNA small subunit methyltransferase C (342 aa).

Belongs to the methyltransferase superfamily. RsmC family. In terms of assembly, monomer.

The protein localises to the cytoplasm. The enzyme catalyses guanosine(1207) in 16S rRNA + S-adenosyl-L-methionine = N(2)-methylguanosine(1207) in 16S rRNA + S-adenosyl-L-homocysteine + H(+). Its function is as follows. Specifically methylates the guanine in position 1207 of 16S rRNA in the 30S particle. This Shewanella loihica (strain ATCC BAA-1088 / PV-4) protein is Ribosomal RNA small subunit methyltransferase C.